A 687-amino-acid polypeptide reads, in one-letter code: Histone deacetylase clr3 (687 aa).

The interval 55-385 (KKSGLCYDPR…ALAVAQSLLG (331 aa)) is histone deacetylase. His195 is an active-site residue.

This sequence belongs to the histone deacetylase family. HD type 2 subfamily. Interacts with ccq1, clr1, clr2 and mit1.

It is found in the nucleus. It localises to the chromosome. The protein resides in the centromere. The protein localises to the telomere. It carries out the reaction N(6)-acetyl-L-lysyl-[histone] + H2O = L-lysyl-[histone] + acetate. Its function is as follows. Responsible for the deacetylation of lysine residues on the N-terminal part of the core histones (H2A, H2B, H3 and H4). Histone deacetylation gives a tag for epigenetic repression and plays an important role in transcriptional regulation, cell cycle progression and developmental events. Histone deacetylases act via the formation of large multiprotein complexes. Required for proper positioning of nucleosomes at heterochromatic loci and for transcriptional gene silencing (TGS) function of the Snf2/Hdac-containing repressor complex (SHREC). This is Histone deacetylase clr3 (clr3) from Schizosaccharomyces pombe (strain 972 / ATCC 24843) (Fission yeast).